The primary structure comprises 602 residues: UvrABC system protein C (602 aa).

A GIY-YIG domain is found at 19 to 97 (EEPGVYRMIG…IKSLAPRYNI (79 aa)). A UVR domain is found at 206–241 (SEVIDDLTARMHAAAERLAFEEAAACRDQVRVLQAV).

The protein belongs to the UvrC family. Interacts with UvrB in an incision complex.

The protein localises to the cytoplasm. In terms of biological role, the UvrABC repair system catalyzes the recognition and processing of DNA lesions. UvrC both incises the 5' and 3' sides of the lesion. The N-terminal half is responsible for the 3' incision and the C-terminal half is responsible for the 5' incision. This is UvrABC system protein C from Aromatoleum aromaticum (strain DSM 19018 / LMG 30748 / EbN1) (Azoarcus sp. (strain EbN1)).